The sequence spans 426 residues: MSKSENLYSAARELIPGGVNSPVRAFTGVGGTPLFIEKADGAYLYDVDGKAYIDYVGSWGPMVLGHNHPAIRNAVIEAAERGLSFGAPTEMEVKMAQLVTELVPTMDMVRMVNSGTEATMSAIRLARGFTGRDKIIKFEGCYHGHADCLLVKAGSGALTLGQPNSPGVPADFAKHTLTCTYNDLASVRAAFEQYPQEIACIIVEPVAGNMNCVPPLPEFLPGLRALCDEFGALLIIDEVMTGFRVALAGAQDYYGVEPDLTCLGKIIGGGMPVGAFGGRRDVMDALAPTGPVYQAGTLSGNPIAMAAGFACLNEVAQPGVHETLDELTTRLAEGLREAAEEAGIPLVVNHVGGMFGIFFTDAESVTCYQDVMACDVERFKRFFHMMLDEGVYLAPSAFEAGFMSVAHSMEDINNTIDAARRVFAKL.

K265 carries the post-translational modification N6-(pyridoxal phosphate)lysine.

It belongs to the class-III pyridoxal-phosphate-dependent aminotransferase family. HemL subfamily. In terms of assembly, homodimer. Pyridoxal 5'-phosphate is required as a cofactor.

It localises to the cytoplasm. It catalyses the reaction (S)-4-amino-5-oxopentanoate = 5-aminolevulinate. Its pathway is porphyrin-containing compound metabolism; protoporphyrin-IX biosynthesis; 5-aminolevulinate from L-glutamyl-tRNA(Glu): step 2/2. This chain is Glutamate-1-semialdehyde 2,1-aminomutase, found in Escherichia coli O127:H6 (strain E2348/69 / EPEC).